The primary structure comprises 556 residues: 2-succinyl-5-enolpyruvyl-6-hydroxy-3-cyclohexene-1-carboxylate synthase (556 aa).

It belongs to the TPP enzyme family. MenD subfamily. As to quaternary structure, homodimer. Mg(2+) is required as a cofactor. It depends on Mn(2+) as a cofactor. Requires thiamine diphosphate as cofactor.

The enzyme catalyses isochorismate + 2-oxoglutarate + H(+) = 5-enolpyruvoyl-6-hydroxy-2-succinyl-cyclohex-3-ene-1-carboxylate + CO2. The protein operates within quinol/quinone metabolism; 1,4-dihydroxy-2-naphthoate biosynthesis; 1,4-dihydroxy-2-naphthoate from chorismate: step 2/7. It participates in quinol/quinone metabolism; menaquinone biosynthesis. Catalyzes the thiamine diphosphate-dependent decarboxylation of 2-oxoglutarate and the subsequent addition of the resulting succinic semialdehyde-thiamine pyrophosphate anion to isochorismate to yield 2-succinyl-5-enolpyruvyl-6-hydroxy-3-cyclohexene-1-carboxylate (SEPHCHC). The chain is 2-succinyl-5-enolpyruvyl-6-hydroxy-3-cyclohexene-1-carboxylate synthase from Salmonella paratyphi A (strain AKU_12601).